We begin with the raw amino-acid sequence, 121 residues long: Large ribosomal subunit protein bL20 (121 aa).

The protein belongs to the bacterial ribosomal protein bL20 family.

Functionally, binds directly to 23S ribosomal RNA and is necessary for the in vitro assembly process of the 50S ribosomal subunit. It is not involved in the protein synthesizing functions of that subunit. The sequence is that of Large ribosomal subunit protein bL20 from Mycoplasma mycoides subsp. mycoides SC (strain CCUG 32753 / NCTC 10114 / PG1).